A 114-amino-acid chain; its full sequence is Tyrosine-protein phosphatase 13 (114 aa).

One can recognise a Tyrosine-protein phosphatase domain in the interval tryptophan 1–isoleucine 114. A substrate-binding site is contributed by glutamate 82.

Belongs to the protein-tyrosine phosphatase family.

It carries out the reaction O-phospho-L-tyrosyl-[protein] + H2O = L-tyrosyl-[protein] + phosphate. This chain is Tyrosine-protein phosphatase 13 (STY-13), found in Styela plicata (Wrinkled sea squirt).